Reading from the N-terminus, the 884-residue chain is DNA mismatch repair protein MutS (884 aa).

651–658 (GPNMSGKS) contacts ATP. Residues 843-884 (LRNQGKSQPAQKNCKKEPAPNRSPDPAVGDQLSLIPAPLFPD) form a disordered region.

The protein belongs to the DNA mismatch repair MutS family.

This protein is involved in the repair of mismatches in DNA. It is possible that it carries out the mismatch recognition step. This protein has a weak ATPase activity. The chain is DNA mismatch repair protein MutS from Synechococcus sp. (strain JA-2-3B'a(2-13)) (Cyanobacteria bacterium Yellowstone B-Prime).